The sequence spans 359 residues: Tyrosine-protein phosphatase non-receptor type 7 (359 aa).

Residues 1-33 (MVQACEGRSRAQLPTLSLGADMTQPPPTKAPAK) form a disordered region. Positions 38-51 (LQERRGSSVALMLD) are interaction with MAP kinases. A Phosphoserine modification is found at Ser-44. A Phosphothreonine modification is found at Thr-66. Phosphoserine occurs at positions 93 and 143. A Tyrosine-protein phosphatase domain is found at 97–349 (LEEEFLKIPS…QFLHHTLALY (253 aa)). Residues Asp-257, 290–296 (CSAGIGR), and Gln-334 each bind substrate. Residue Cys-290 is the Phosphocysteine intermediate of the active site. Cys-290 carries the cysteine sulfenic acid (-SOH) modification.

This sequence belongs to the protein-tyrosine phosphatase family. Non-receptor class subfamily. In terms of processing, oxidized at active site cysteine. Treatment with pervanadate (vanadate and H(2)O(2)) or with antigen enhanced oxidation of active site cysteine. Expressed in bone marrow-derived mast cells.

The protein resides in the cytoplasm. It is found in the cytoskeleton. It catalyses the reaction O-phospho-L-tyrosyl-[protein] + H2O = L-tyrosyl-[protein] + phosphate. Its activity is regulated as follows. Inhibited upon FCER1A triggering. In terms of biological role, may play a role in the regulation of T and B-lymphocyte development and signal transduction. The sequence is that of Tyrosine-protein phosphatase non-receptor type 7 (Ptpn7) from Mus musculus (Mouse).